Consider the following 1045-residue polypeptide: Fibrosin-1-like protein (1045 aa).

Positions 1–12 (MEAKVRPSRRSR) are enriched in basic residues. Disordered stretches follow at residues 1–86 (MEAK…DGFA) and 99–315 (DMAL…THVP). Positions 13-28 (AQRDRGRRREAARDAR) are enriched in basic and acidic residues. The segment covering 48-63 (GLRGAPPRGAAPAPRT) has biased composition (low complexity). The segment covering 99–123 (DMALKPHERKEKWERRLIKKPRESE) has biased composition (basic and acidic residues). Over residues 183–197 (EATSSRDPLSDSSAH) the composition is skewed to polar residues. Over residues 270 to 280 (HAAPCPGPPPG) the composition is skewed to pro residues. A Phosphoserine modification is found at Ser-340. Residues 443 to 457 (QHTHQHTHQHTHQHQ) are compositionally biased toward basic residues. Disordered stretches follow at residues 443–462 (QHTHQHTHQHTHQHQHTFAP) and 719–753 (EGSSVHGLPSPHEAWNRLHRAPPSFPAPPPWPKSV). The span at 741–750 (PSFPAPPPWP) shows a compositional bias: pro residues. Residue Ser-790 is modified to Phosphoserine. Disordered regions lie at residues 809–880 (ELGR…APLQ) and 910–961 (AAAP…PALD). The span at 817-837 (AEREAEPRVKESRSPAKEEAA) shows a compositional bias: basic and acidic residues. A Glycyl lysine isopeptide (Lys-Gly) (interchain with G-Cter in SUMO2) cross-link involves residue Lys-858. The span at 910–922 (AAAPAPGSAALLE) shows a compositional bias: low complexity. A compositionally biased stretch (basic and acidic residues) spans 923 to 949 (PPERPYRDREPHGYSPERLRGELERAR). A phosphoserine mark is found at Ser-937 and Ser-977. Thr-989 and Thr-1010 each carry phosphothreonine. Positions 991-1045 (PAAAALGAPPPLVTAAGPPTPPGPPRSRTTPLGGLGPGEARDYSPSRNPPEVEAR) are disordered. A compositionally biased stretch (pro residues) spans 998-1015 (APPPLVTAAGPPTPPGPP). Over residues 1029–1045 (EARDYSPSRNPPEVEAR) the composition is skewed to basic and acidic residues.

It belongs to the AUTS2 family.

In Homo sapiens (Human), this protein is Fibrosin-1-like protein (FBRSL1).